The sequence spans 263 residues: Histidine racemase (263 aa).

Cys67 serves as the catalytic Proton acceptor. The active-site Proton donor is the Cys209.

The protein belongs to the histidine racemase family. In terms of assembly, homodimer.

It carries out the reaction L-histidine = D-histidine. In terms of biological role, cofactor-independent isomerase that catalyzes the reversible conversion of L-histidine to D-histidine. May play a role in growth of F.nucleatum. This chain is Histidine racemase, found in Fusobacterium nucleatum subsp. nucleatum (strain ATCC 23726 / VPI 4351).